A 239-amino-acid chain; its full sequence is Ribonuclease PH (239 aa).

Phosphate-binding positions include arginine 86 and glycine 124–arginine 126.

It belongs to the RNase PH family. As to quaternary structure, homohexameric ring arranged as a trimer of dimers.

It catalyses the reaction tRNA(n+1) + phosphate = tRNA(n) + a ribonucleoside 5'-diphosphate. In terms of biological role, phosphorolytic 3'-5' exoribonuclease that plays an important role in tRNA 3'-end maturation. Removes nucleotide residues following the 3'-CCA terminus of tRNAs; can also add nucleotides to the ends of RNA molecules by using nucleoside diphosphates as substrates, but this may not be physiologically important. Probably plays a role in initiation of 16S rRNA degradation (leading to ribosome degradation) during starvation. This is Ribonuclease PH from Sodalis glossinidius (strain morsitans).